The primary structure comprises 93 residues: YcgL domain-containing protein PSHAb0508 (93 aa).

The 85-residue stretch at 1 to 85 (MLTAVYKSKK…PQENLLSQLR (85 aa)) folds into the YcgL domain.

This is YcgL domain-containing protein PSHAb0508 from Pseudoalteromonas translucida (strain TAC 125).